The primary structure comprises 197 residues: Glycerol-3-phosphate acyltransferase (197 aa).

A run of 5 helical transmembrane segments spans residues 1-21 (MDFI…GLLI), 50-70 (LGFA…VLAA), 82-102 (IVCL…YLGF), 112-132 (LGVF…VFAA), and 159-179 (GASQ…WIKH).

It belongs to the PlsY family. In terms of assembly, probably interacts with PlsX.

It is found in the cell inner membrane. It carries out the reaction an acyl phosphate + sn-glycerol 3-phosphate = a 1-acyl-sn-glycero-3-phosphate + phosphate. It functions in the pathway lipid metabolism; phospholipid metabolism. Its function is as follows. Catalyzes the transfer of an acyl group from acyl-phosphate (acyl-PO(4)) to glycerol-3-phosphate (G3P) to form lysophosphatidic acid (LPA). This enzyme utilizes acyl-phosphate as fatty acyl donor, but not acyl-CoA or acyl-ACP. The protein is Glycerol-3-phosphate acyltransferase of Desulfotalea psychrophila (strain LSv54 / DSM 12343).